We begin with the raw amino-acid sequence, 258 residues long: UPF0246 protein Pnec_1068 (258 aa).

It belongs to the UPF0246 family.

The polypeptide is UPF0246 protein Pnec_1068 (Polynucleobacter necessarius subsp. necessarius (strain STIR1)).